Reading from the N-terminus, the 228-residue chain is UPF0758 protein RALTA_A2508 (228 aa).

Residues 102–224 (GFDSPDSVRS…IRSLAESCER (123 aa)) form the MPN domain. Residues His173, His175, and Asp186 each coordinate Zn(2+). The short motif at 173–186 (HNHPRGTTAPSQSD) is the JAMM motif element.

Belongs to the UPF0758 family.

The chain is UPF0758 protein RALTA_A2508 from Cupriavidus taiwanensis (strain DSM 17343 / BCRC 17206 / CCUG 44338 / CIP 107171 / LMG 19424 / R1) (Ralstonia taiwanensis (strain LMG 19424)).